The following is a 351-amino-acid chain: Photosystem II D2 protein (351 aa).

The chain crosses the membrane as a helical span at residues 39-59 (TAYLAVGGWMTGTTFVTSWYT). H116 contributes to the chlorophyll a binding site. Residues 123-139 (GFCLRQFEIARLVGIRP) traverse the membrane as a helical segment. Residues Q128 and N141 each coordinate pheophytin a. Residues 151 to 164 (VFVSVFLLYPLGQA) form a helical membrane-spanning segment. Residue H196 coordinates chlorophyll a. The helical transmembrane segment at 206–226 (GALLCAIHGATVENTLFEDGD) threads the bilayer. A plastoquinone contacts are provided by H213 and F260. H213 contributes to the Fe cation binding site. Residue H267 participates in Fe cation binding. The helical transmembrane segment at 277–293 (GLWTSAIGIVGLALNLR) threads the bilayer.

Belongs to the reaction center PufL/M/PsbA/D family. In terms of assembly, PSII is composed of 1 copy each of membrane proteins PsbA, PsbB, PsbC, PsbD, PsbE, PsbF, PsbH, PsbI, PsbJ, PsbK, PsbL, PsbM, PsbT, PsbX, PsbY, PsbZ, Psb30/Ycf12, at least 3 peripheral proteins of the oxygen-evolving complex and a large number of cofactors. It forms dimeric complexes. The D1/D2 heterodimer binds P680, chlorophylls that are the primary electron donor of PSII, and subsequent electron acceptors. It shares a non-heme iron and each subunit binds pheophytin, quinone, additional chlorophylls, carotenoids and lipids. There is also a Cl(-1) ion associated with D1 and D2, which is required for oxygen evolution. The PSII complex binds additional chlorophylls, carotenoids and specific lipids. is required as a cofactor.

It localises to the plastid. The protein resides in the chloroplast thylakoid membrane. The enzyme catalyses 2 a plastoquinone + 4 hnu + 2 H2O = 2 a plastoquinol + O2. In terms of biological role, photosystem II (PSII) is a light-driven water:plastoquinone oxidoreductase that uses light energy to abstract electrons from H(2)O, generating O(2) and a proton gradient subsequently used for ATP formation. It consists of a core antenna complex that captures photons, and an electron transfer chain that converts photonic excitation into a charge separation. The D1/D2 (PsbA/PsbD) reaction center heterodimer binds P680, the primary electron donor of PSII as well as several subsequent electron acceptors. D2 is needed for assembly of a stable PSII complex. In Phaeodactylum tricornutum (strain CCAP 1055/1), this protein is Photosystem II D2 protein.